The sequence spans 183 residues: Abscisic acid receptor PYL10 (183 aa).

The interval 20-172 is START-like; sequence HELVESQCSS…NLNSLADVTE (153 aa). A disulfide bridge connects residues Cys-27 and Cys-153. Residues Lys-56, 85–90, 112–118, and Glu-137 each bind abscisate; these read ATKSTE and RLKNYSS. The short motif at 81–85 is the Gate loop element; it reads SGLPA. The short motif at 111–113 is the Latch loop element; sequence HRL.

It belongs to the PYR/PYL/RCAR abscisic acid intracellular receptor family. As to quaternary structure, monomer. Forms heterodimer with PYL13, thus antagonizing PP2Cs-binding and ABA-independent inhibition of PP2Cs. Homodimer. Binds ABA on one subunit only. Binds to CARs protein in an ABA-independent manner, both at the plasma membrane and in the nucleus. Interacts with ABI1 and HAB1, and possibly with other PP2Cs, in an ABA-independent manner.

Its subcellular location is the cytoplasm. The protein resides in the nucleus. The protein localises to the cell membrane. In terms of biological role, receptor for abscisic acid (ABA) required for ABA-mediated responses such as stomatal closure and germination inhibition. Inhibits the activity of group-A protein phosphatases type 2C (PP2Cs) in an ABA-independent manner but more efficiently when activated by ABA. Can be activated by both (-)-ABA and (+)-ABA. The protein is Abscisic acid receptor PYL10 (PYL10) of Arabidopsis thaliana (Mouse-ear cress).